The chain runs to 765 residues: DNA topoisomerase 1 (765 aa).

Basic and acidic residues predominate over residues Met1–Lys23. Residues Met1 to Glu199 are disordered. Ser2 bears the N-acetylserine mark. Ser2 and Ser10 each carry phosphoserine. Basic residues predominate over residues His24 to Lys39. The segment covering Lys40–Asn108 has biased composition (basic and acidic residues). Ser57 is subject to Phosphoserine. Lys101 is covalently cross-linked (Glycyl lysine isopeptide (Lys-Gly) (interchain with G-Cter in SUMO2)). Residue Lys103 forms a Glycyl lysine isopeptide (Lys-Gly) (interchain with G-Cter in SUMO); alternate linkage. A Glycyl lysine isopeptide (Lys-Gly) (interchain with G-Cter in SUMO2); alternate cross-link involves residue Lys103. Ser112 is modified (phosphoserine). Lys117 is covalently cross-linked (Glycyl lysine isopeptide (Lys-Gly) (interchain with G-Cter in SUMO); alternate). Lys117 is covalently cross-linked (Glycyl lysine isopeptide (Lys-Gly) (interchain with G-Cter in SUMO2); alternate). A Glycyl lysine isopeptide (Lys-Gly) (interchain with G-Cter in SUMO1); alternate cross-link involves residue Lys117. The span at Pro129 to Glu166 shows a compositional bias: basic and acidic residues. Glycyl lysine isopeptide (Lys-Gly) (interchain with G-Cter in SUMO2) cross-links involve residues Lys134 and Lys148. Lys153 participates in a covalent cross-link: Glycyl lysine isopeptide (Lys-Gly) (interchain with G-Cter in SUMO); alternate. Residue Lys153 forms a Glycyl lysine isopeptide (Lys-Gly) (interchain with G-Cter in SUMO2); alternate linkage. Residues Lys158 and Lys164 each participate in a glycyl lysine isopeptide (Lys-Gly) (interchain with G-Cter in SUMO2) cross-link. Residue Lys172 forms a Glycyl lysine isopeptide (Lys-Gly) (interchain with G-Cter in SUMO2); alternate linkage. At Lys172 the chain carries N6-acetyllysine; alternate. Over residues Lys179–Glu199 the composition is skewed to basic and acidic residues. Lys204 participates in a covalent cross-link: Glycyl lysine isopeptide (Lys-Gly) (interchain with G-Cter in SUMO2). Lys280 carries the post-translational modification N6-acetyllysine. Residue Lys336 forms a Glycyl lysine isopeptide (Lys-Gly) (interchain with G-Cter in SUMO2) linkage. Interaction with DNA regions lie at residues Lys425–Tyr426 and Arg488–Lys493. The Topo IB-type catalytic domain maps to Ser432–Phe765. A Phosphoserine; by CK2 modification is found at Ser506. Lys549 participates in a covalent cross-link: Glycyl lysine isopeptide (Lys-Gly) (interchain with G-Cter in SUMO2). The interaction with DNA stretch occupies residues Thr585–Lys587. Glycyl lysine isopeptide (Lys-Gly) (interchain with G-Cter in SUMO2) cross-links involve residues Lys642, Lys700, and Lys712. The active-site O-(3'-phospho-DNA)-tyrosine intermediate is Tyr723.

It belongs to the type IB topoisomerase family. In terms of assembly, monomer. Interacts with ERCC6. Interacts with TPRN; TPRN interacts with a number of DNA damage response proteins, is recruited to sites of DNA damage and may play a role in DNA damage repair. As to quaternary structure, (Microbial infection) Interacts with SV40 Large T antigen; this interactions allows viral DNA replication. In terms of processing, sumoylated. Lys-117 is the main site of sumoylation. Sumoylation plays a role in partitioning TOP1 between nucleoli and nucleoplasm. Levels are dramatically increased on camptothecin (CPT) treatment. Phosphorylation at Ser-506 by CK2 increases binding to supercoiled DNA and sensitivity to camptothecin. Endothelial cells.

Its subcellular location is the nucleus. The protein resides in the nucleolus. It localises to the nucleoplasm. It carries out the reaction ATP-independent breakage of single-stranded DNA, followed by passage and rejoining.. Its activity is regulated as follows. Specifically inhibited by camptothecin (CPT), a plant alkaloid with antitumor activity. Releases the supercoiling and torsional tension of DNA introduced during the DNA replication and transcription by transiently cleaving and rejoining one strand of the DNA duplex. Introduces a single-strand break via transesterification at a target site in duplex DNA. The scissile phosphodiester is attacked by the catalytic tyrosine of the enzyme, resulting in the formation of a DNA-(3'-phosphotyrosyl)-enzyme intermediate and the expulsion of a 5'-OH DNA strand. The free DNA strand then rotates around the intact phosphodiester bond on the opposing strand, thus removing DNA supercoils. Finally, in the religation step, the DNA 5'-OH attacks the covalent intermediate to expel the active-site tyrosine and restore the DNA phosphodiester backbone. Regulates the alternative splicing of tissue factor (F3) pre-mRNA in endothelial cells. Involved in the circadian transcription of the core circadian clock component BMAL1 by altering the chromatin structure around the ROR response elements (ROREs) on the BMAL1 promoter. The protein is DNA topoisomerase 1 (TOP1) of Homo sapiens (Human).